The following is a 311-amino-acid chain: Urease accessory protein UreD 2 (311 aa).

Belongs to the UreD family. In terms of assembly, ureD, UreF and UreG form a complex that acts as a GTP-hydrolysis-dependent molecular chaperone, activating the urease apoprotein by helping to assemble the nickel containing metallocenter of UreC. The UreE protein probably delivers the nickel.

It is found in the cytoplasm. In terms of biological role, required for maturation of urease via the functional incorporation of the urease nickel metallocenter. This is Urease accessory protein UreD 2 from Methylorubrum extorquens (strain PA1) (Methylobacterium extorquens).